Reading from the N-terminus, the 365-residue chain is Phosphatidylcholine:ceramide cholinephosphotransferase 4 (365 aa).

Residues Met1–Gln44 are Cytoplasmic-facing. The chain crosses the membrane as a helical span at residues Val45–Ile65. Residues Thr66–Gly92 are Lumenal-facing. The helical transmembrane segment at Met93–Phe113 threads the bilayer. At Lys114–Arg165 the chain is on the cytoplasmic side. The helical transmembrane segment at Phe166 to Leu186 threads the bilayer. The Lumenal segment spans residues Pro187–Thr229. Residue His228 is part of the active site. Residues Val230–Phe250 traverse the membrane as a helical segment. Arg251 is a topological domain (cytoplasmic). A helical membrane pass occupies residues Pro252–Tyr272. Active-site residues include His271 and Asp275. The Lumenal segment spans residues Thr273–Asp275. Residues Val276–Gly296 form a helical membrane-spanning segment. Residues Ala297–Val365 lie on the Cytoplasmic side of the membrane.

The protein belongs to the sphingomyelin synthase family.

The protein resides in the golgi apparatus membrane. The enzyme catalyses an N-acylsphing-4-enine + a 1,2-diacyl-sn-glycero-3-phosphocholine = a sphingomyelin + a 1,2-diacyl-sn-glycerol. The catalysed reaction is an N-acylsphinganine + a 1,2-diacyl-sn-glycero-3-phosphocholine = an N-acylsphinganine-1-phosphocholine + a 1,2-diacyl-sn-glycerol. It carries out the reaction an N-acylsphing-4-enine + a 1,2-diacyl-sn-glycero-3-phosphoethanolamine = an N-acylsphing-4-enine 1-phosphoethanolamine + a 1,2-diacyl-sn-glycerol. It catalyses the reaction an N-acylsphinganine + a 1,2-diacyl-sn-glycero-3-phosphoethanolamine = an N-acylsphinganine-1-phosphoethanolamine + a 1,2-diacyl-sn-glycerol. The enzyme catalyses a 1,2-diacyl-sn-glycero-3-phospho-(1D-myo-inositol) + an N-acylsphing-4-enine = an N-acylsphing-4-enine-(1D-myo-inositol) + a 1,2-diacyl-sn-glycerol. The catalysed reaction is an N-acylsphinganine + a 1,2-diacyl-sn-glycero-3-phospho-(1D-myo-inositol) = an N-acylsphinganine-(1D-myo-inositol) + a 1,2-diacyl-sn-glycerol. Its function is as follows. Bifunctional sphingomyelin (SM)/ethanolamine phosphorylceramide (EPC) synthase with minimal inositol phosphorylceramide (IPC) synthase activity. Specificity is likely to be defined by residues in the lumenal catalytic domain that interact with the polar head groups of the phospholipid donors. SM is synthesized by both stages of the parasite life cycle, bloodstream forms (BSF) and procyclic forms (PCF), by transferring the phosphoryl headgroup from a 1,2-diacyl-sn-glycero-3-phosphocholine to an N-acylsphing-4-enine (ceramide) or an N-acylsphinganine (dihydroceramide) with release of 1,2-diacyl-sn-glycerol. Also catalyzes the reverse reaction, production of ceramide from sphingomyelin. EPC is synthesized by transferring phosphoethanolamine from a 1,2-diacyl-sn-glycero-3-phosphoethanolamine to ceramide or dihydroceramide by BSF and PCF, while IPC is confined to PCF. The ceramide/dihydroceramide ratios are skewed towards dihydroceramide in PCF parasites and ceramide in BSF parasites, this is likely due to differential expression and/or regulation of dihydroceramide desaturase, the enzyme responsible for converting dihydroceramide to ceramide. In Trypanosoma brucei brucei, this protein is Phosphatidylcholine:ceramide cholinephosphotransferase 4.